The sequence spans 899 residues: Proline-rich transmembrane protein 4 (899 aa).

An N-terminal signal peptide occupies residues 1-23; it reads MARHGCLGLGLFCCVLFAATVGP. 2 disordered regions span residues 110 to 152 and 295 to 340; these read LTEW…RRST and TVPI…PEAP. 5 helical membrane passes run 370–390, 392–412, 430–450, 467–487, and 500–520; these read VGAL…LLPW, CPPG…AGTT, ALAW…GLGL, LAAL…GSAA, and GLHA…SCWG. Serine 641 is modified (phosphoserine). 2 disordered regions span residues 769-797 and 839-869; these read TGGR…AWPA and PSGS…ASEL. Low complexity predominate over residues 840–851; that stretch reads SGSSPSLPASGS.

The protein resides in the membrane. The sequence is that of Proline-rich transmembrane protein 4 (PRRT4) from Homo sapiens (Human).